The following is an 83-amino-acid chain: Alpha-neurotoxin NTX-2 (83 aa).

Positions 1 to 21 (MKTLLLTLLVVTIVCLDLGYT) are cleaved as a signal peptide. Disulfide bonds link C24-C45, C38-C62, C64-C75, and C76-C81.

This sequence belongs to the three-finger toxin family. Short-chain subfamily. Type I alpha-neurotoxin sub-subfamily. Expressed by the venom gland.

It localises to the secreted. In terms of biological role, binds to muscle nicotinic acetylcholine receptor (nAChR) and inhibit acetylcholine from binding to the receptor, thereby impairing neuromuscular transmission. This is Alpha-neurotoxin NTX-2 from Naja sputatrix (Malayan spitting cobra).